Reading from the N-terminus, the 194-residue chain is Fe/S biogenesis protein NfuA (194 aa).

[4Fe-4S] cluster-binding residues include Cys-152 and Cys-155.

The protein belongs to the NfuA family. Homodimer. The cofactor is [4Fe-4S] cluster.

Functionally, involved in iron-sulfur cluster biogenesis. Binds a 4Fe-4S cluster, can transfer this cluster to apoproteins, and thereby intervenes in the maturation of Fe/S proteins. Could also act as a scaffold/chaperone for damaged Fe/S proteins. This is Fe/S biogenesis protein NfuA from Azotobacter vinelandii (strain DJ / ATCC BAA-1303).